The following is a 360-amino-acid chain: MTIKIAVLPGDGIGPEIVAEALKVLDCLRSDFGLAVETEHALIGGAAYDAHGTPFPKETLELCRAADSILLGAVGGPKWEPLDYSLRPERGLLGLRSELELFSNLRPAVLYPQLVSASTLKPEVVAGLDIMIVRELTGGIYFGKPRGRRINEDGEREGYNTLVYSESEIRRIAHSAFQIARKRNRRLCSIDKANVLECTELWREVVIEVGKDYPDVALSHMYVDNAAMQLVRNPKQFDVMLTDNMFGDILSDCAAMLTGSIGMLPSASLAESGKGMYEPIHGSAPDIAGRGIANPIATILSLAMMLRYSFDDAVSAERIGKAVQTALDQGFRTADIASEGTVEVGTAAMGDAIVAALRAV.

An NAD(+)-binding site is contributed by 76 to 89 (GPKWEPLDYSLRPE). The substrate site is built by arginine 96, arginine 106, arginine 134, and aspartate 224. Mg(2+)-binding residues include aspartate 224, aspartate 248, and aspartate 252. Residue 282 to 294 (GSAPDIAGRGIAN) participates in NAD(+) binding.

This sequence belongs to the isocitrate and isopropylmalate dehydrogenases family. LeuB type 1 subfamily. As to quaternary structure, homodimer. It depends on Mg(2+) as a cofactor. Mn(2+) serves as cofactor.

It localises to the cytoplasm. It catalyses the reaction (2R,3S)-3-isopropylmalate + NAD(+) = 4-methyl-2-oxopentanoate + CO2 + NADH. The protein operates within amino-acid biosynthesis; L-leucine biosynthesis; L-leucine from 3-methyl-2-oxobutanoate: step 3/4. In terms of biological role, catalyzes the oxidation of 3-carboxy-2-hydroxy-4-methylpentanoate (3-isopropylmalate) to 3-carboxy-4-methyl-2-oxopentanoate. The product decarboxylates to 4-methyl-2 oxopentanoate. The polypeptide is 3-isopropylmalate dehydrogenase (Methylococcus capsulatus (strain ATCC 33009 / NCIMB 11132 / Bath)).